A 324-amino-acid chain; its full sequence is MKLDAVTFGESMAMFYANEYGGLHEVSTFSKGLAGAESNVACGLARLGFRMGWMSKVGNDQLGTFILQELKKEGVDVSRVIRSQDENPTGLLLKSKVKEGDPQVTYYRKNSAASTLTTAEYPRDYFQCAGHLHVTGIPPALSAEMKDFTYHVMNDMRNAGKTISFDPNVRPSLWPDQATMVHTINDLAGLADWFFPGIAEGELLTGEKTPEGIADYYLKKGASFVAIKLGKEGAYFKTGTSEGFLEGCRVDRVVDTVGAGDGFAVGVISGILDGLSYKDAVQRGNAIGALQVQAPGDMDGLPTREKLASFLSAQRTVHQKKGDY.

Residues 35 to 39, 106 to 108, and Arg170 contribute to the substrate site; these read GAESN and YYR. Residues 168-170, 228-233, and 258-261 contribute to the ATP site; these read NVR, KLGKEG, and GAGD. The substrate site is built by Asp261 and Asp297. Asp261 (proton acceptor) is an active-site residue.

Belongs to the carbohydrate kinase PfkB family.

The enzyme catalyses 2-dehydro-3-deoxy-D-gluconate + ATP = 2-dehydro-3-deoxy-6-phospho-D-gluconate + ADP + H(+). Its pathway is carbohydrate acid metabolism; 2-dehydro-3-deoxy-D-gluconate degradation; D-glyceraldehyde 3-phosphate and pyruvate from 2-dehydro-3-deoxy-D-gluconate: step 1/2. Functionally, catalyzes the phosphorylation of 2-keto-3-deoxygluconate (KDG) to produce 2-keto-3-deoxy-6-phosphogluconate (KDPG). This chain is 2-dehydro-3-deoxygluconokinase (kdgK), found in Bacillus subtilis (strain 168).